We begin with the raw amino-acid sequence, 395 residues long: MTDRQTDTAPSPSYHLLPGRRRTVDAAASRGQGPEPAPGGGVEGVGARGVALKLFVQLLGCSRFGGAVVRAGEAEPSGAARSASSGREEPQPEEGEEEEEKEEERGPQWRLGARKPGSWTGEAAVCADSAPAARAPQALARASGRGGRVARRGAEESGPPHSPSRRGSASRAGPGRASETMNFLLSWVHWSLALLLYLHHAKWSQAAPMAEGGGQNHHEVVKFMDVYQRSYCHPIETLVDIFQEYPDEIEYIFKPSCVPLMRCGGCCNDEGLECVPTEESNITMQIMRIKPHQGQHIGEMSFLQHNKCECRPKKDRARQEKKSVRGKGKGQKRKRKKSRYKSWSVPCGPCSERRKHLFVQDPQTCKCSCKNTDSRCKARQLELNERTCRCDKPRR.

2 disordered regions span residues 1–45 (MTDR…VEGV) and 73–175 (EAEP…AGPG). Low complexity predominate over residues 73 to 85 (EAEPSGAARSASS). A compositionally biased stretch (acidic residues) spans 91-102 (QPEEGEEEEEKE). Composition is skewed to low complexity over residues 123-143 (AAVC…ARAS) and 165-175 (RRGSASRAGPG). 3 disulfide bridges follow: cysteine 232-cysteine 274, cysteine 263-cysteine 308, and cysteine 267-cysteine 310. An N-linked (GlcNAc...) asparagine glycan is attached at asparagine 281. Residues 314–323 (KDRARQEKKS) show a composition bias toward basic and acidic residues. Residues 314 to 344 (KDRARQEKKSVRGKGKGQKRKRKKSRYKSWS) are disordered. Over residues 324 to 340 (VRGKGKGQKRKRKKSRY) the composition is skewed to basic residues.

It belongs to the PDGF/VEGF growth factor family. Homodimer; disulfide-linked. Also found as heterodimer with PGF. Interacts with NRP1. Interacts with isoform 2 of BSG. Interacts with CD82; this interaction inhibits VEGFA-mediated signaling pathway. Post-translationally, produced by use of an alternative upstream CUG codon and post-translationally processed into the N-terminal N-VEGF form and the C-terminal secreted VEGFA form. In terms of tissue distribution, higher expression in pituitary tumors than the pituitary gland. Widely expressed. As to expression, not widely expressed.

Its subcellular location is the cytoplasm. It localises to the nucleus. The protein localises to the secreted. The protein resides in the endoplasmic reticulum. It is found in the golgi apparatus. Its subcellular location is the extracellular space. It localises to the extracellular matrix. In terms of biological role, participates in the induction of key genes involved in the response to hypoxia and in the induction of angiogenesis such as HIF1A. Involved in protecting cells from hypoxia-mediated cell death. Growth factor active in angiogenesis, vasculogenesis and endothelial cell growth. Induces endothelial cell proliferation, promotes cell migration, inhibits apoptosis and induces permeabilization of blood vessels. Binds to the FLT1/VEGFR1 and KDR/VEGFR2 receptors, heparan sulfate and heparin. Binds to the NRP1/neuropilin-1 receptor. Binding to NRP1 initiates a signaling pathway needed for motor neuron axon guidance and cell body migration, including for the caudal migration of facial motor neurons from rhombomere 4 to rhombomere 6 during embryonic development. Also binds the DEAR/FBXW7-AS1 receptor. Its function is as follows. Binds to the KDR receptor but does not activate downstream signaling pathways, does not activate angiogenesis and inhibits tumor growth. The sequence is that of Vascular endothelial growth factor A, long form (VEGFA) from Homo sapiens (Human).